Consider the following 147-residue polypeptide: 3-dehydroquinate dehydratase (147 aa).

Catalysis depends on Y22, which acts as the Proton acceptor. Residues N76, H82, and D89 each coordinate substrate. Catalysis depends on H102, which acts as the Proton donor. Substrate is bound by residues 103–104 (IS) and R113.

This sequence belongs to the type-II 3-dehydroquinase family. In terms of assembly, homododecamer.

It carries out the reaction 3-dehydroquinate = 3-dehydroshikimate + H2O. It functions in the pathway metabolic intermediate biosynthesis; chorismate biosynthesis; chorismate from D-erythrose 4-phosphate and phosphoenolpyruvate: step 3/7. Functionally, catalyzes a trans-dehydration via an enolate intermediate. The chain is 3-dehydroquinate dehydratase from Fusobacterium nucleatum subsp. nucleatum (strain ATCC 25586 / DSM 15643 / BCRC 10681 / CIP 101130 / JCM 8532 / KCTC 2640 / LMG 13131 / VPI 4355).